We begin with the raw amino-acid sequence, 189 residues long: Glycerol-3-phosphate acyltransferase (189 aa).

A run of 5 helical transmembrane segments spans residues 1–21 (MVWL…AVLL), 50–70 (KLAI…VLVA), 72–92 (WLGL…IGHL), 111–131 (MLLG…LLTF), and 151–171 (LLAW…ALIV).

The protein belongs to the PlsY family. Probably interacts with PlsX.

The protein localises to the cell inner membrane. It catalyses the reaction an acyl phosphate + sn-glycerol 3-phosphate = a 1-acyl-sn-glycero-3-phosphate + phosphate. The protein operates within lipid metabolism; phospholipid metabolism. Functionally, catalyzes the transfer of an acyl group from acyl-phosphate (acyl-PO(4)) to glycerol-3-phosphate (G3P) to form lysophosphatidic acid (LPA). This enzyme utilizes acyl-phosphate as fatty acyl donor, but not acyl-CoA or acyl-ACP. The chain is Glycerol-3-phosphate acyltransferase from Pseudomonas paraeruginosa (strain DSM 24068 / PA7) (Pseudomonas aeruginosa (strain PA7)).